Reading from the N-terminus, the 260-residue chain is Probable 6-oxopurine nucleoside phosphorylase (260 aa).

Phosphate-binding positions include serine 9 and 49–50 (RH). Methionine 182 provides a ligand contact to substrate. Threonine 183 serves as a coordination point for phosphate. 206 to 208 (NMA) is a binding site for substrate.

This sequence belongs to the PNP/MTAP phosphorylase family. MTAP subfamily. In terms of assembly, homohexamer. Dimer of a homotrimer.

The enzyme catalyses a purine D-ribonucleoside + phosphate = a purine nucleobase + alpha-D-ribose 1-phosphate. The protein operates within purine metabolism; purine nucleoside salvage. Purine nucleoside phosphorylase which is highly specific for 6-oxopurine nucleosides. Cleaves guanosine or inosine to respective bases and sugar-1-phosphate molecules. Involved in purine salvage. This is Probable 6-oxopurine nucleoside phosphorylase from Moorella thermoacetica (strain ATCC 39073 / JCM 9320).